The chain runs to 573 residues: Dihydroxy-acid dehydratase (573 aa).

Cys-62 is a binding site for [2Fe-2S] cluster. Mg(2+) is bound at residue Asp-94. [2Fe-2S] cluster is bound at residue Cys-135. The Mg(2+) site is built by Asp-136 and Lys-137. The residue at position 137 (Lys-137) is an N6-carboxylysine. Cys-212 lines the [2Fe-2S] cluster pocket. A Mg(2+)-binding site is contributed by Glu-463. Ser-489 acts as the Proton acceptor in catalysis.

It belongs to the IlvD/Edd family. In terms of assembly, homodimer. Requires [2Fe-2S] cluster as cofactor. The cofactor is Mg(2+).

It catalyses the reaction (2R)-2,3-dihydroxy-3-methylbutanoate = 3-methyl-2-oxobutanoate + H2O. It carries out the reaction (2R,3R)-2,3-dihydroxy-3-methylpentanoate = (S)-3-methyl-2-oxopentanoate + H2O. It participates in amino-acid biosynthesis; L-isoleucine biosynthesis; L-isoleucine from 2-oxobutanoate: step 3/4. Its pathway is amino-acid biosynthesis; L-valine biosynthesis; L-valine from pyruvate: step 3/4. Functionally, functions in the biosynthesis of branched-chain amino acids. Catalyzes the dehydration of (2R,3R)-2,3-dihydroxy-3-methylpentanoate (2,3-dihydroxy-3-methylvalerate) into 2-oxo-3-methylpentanoate (2-oxo-3-methylvalerate) and of (2R)-2,3-dihydroxy-3-methylbutanoate (2,3-dihydroxyisovalerate) into 2-oxo-3-methylbutanoate (2-oxoisovalerate), the penultimate precursor to L-isoleucine and L-valine, respectively. The polypeptide is Dihydroxy-acid dehydratase (Arthrobacter sp. (strain FB24)).